A 251-amino-acid chain; its full sequence is 2,3-bisphosphoglycerate-dependent phosphoglycerate mutase (251 aa).

Substrate-binding positions include 11 to 18 (RHGNSDWN), 24 to 25 (TG), arginine 63, 90 to 93 (ERHY), lysine 101, 117 to 118 (RR), and 185 to 186 (GN). The active-site Tele-phosphohistidine intermediate is the histidine 12. Glutamate 90 serves as the catalytic Proton donor/acceptor. The disordered stretch occupies residues 117–142 (RRSFDVPPPPIDDDDEYSQSRDPRYA).

This sequence belongs to the phosphoglycerate mutase family. BPG-dependent PGAM subfamily.

It catalyses the reaction (2R)-2-phosphoglycerate = (2R)-3-phosphoglycerate. It functions in the pathway carbohydrate degradation; glycolysis; pyruvate from D-glyceraldehyde 3-phosphate: step 3/5. Its function is as follows. Catalyzes the interconversion of 2-phosphoglycerate and 3-phosphoglycerate. The sequence is that of 2,3-bisphosphoglycerate-dependent phosphoglycerate mutase from Clavibacter michiganensis subsp. michiganensis (strain NCPPB 382).